A 157-amino-acid chain; its full sequence is UPF0225 protein Psyr_3863 (157 aa).

It belongs to the UPF0225 family.

The chain is UPF0225 protein Psyr_3863 from Pseudomonas syringae pv. syringae (strain B728a).